The primary structure comprises 370 residues: MLISIAFLLVLCLLNYSSFRMLKSFLTLKKISRYAYLGFFILLSAGEATFVFYRNVMPSHLFVLTSACSFVSFIAFVFSLSFYGFSYSVEKIDFLPSRRKGLKNFLRIGFYLALLGYFWRGFYEGLARPKIKETPIYLDKLDKELKIILLTDMHVGSLLQKDFVNYIVEEVNQKEVDMVLIGGDLVDENIEKVKSFLLPLNNLKSTHGTFYVPGNHEYYHGIEPILSFLNTLDMTILGNECVHLGGINLCGVYDYFARKRQDFAPDIDKALKKRDSSKPTILLAHQPKQIRSLKESHSIDLVLSGHTHAGQIFPFSLLVKLAQTYLHGLYKHSGTTQIYVSSGAGYWGIPLRFLAPSEIAYLRLLPKNQA.

Aspartate 152, histidine 154, aspartate 184, asparagine 215, histidine 306, and histidine 308 together coordinate a divalent metal cation.

This sequence belongs to the metallophosphoesterase superfamily. A divalent metal cation serves as cofactor.

This is an uncharacterized protein from Helicobacter pylori (strain J99 / ATCC 700824) (Campylobacter pylori J99).